A 326-amino-acid polypeptide reads, in one-letter code: uncharacterized protein (326 aa).

3 Solcar repeats span residues 15–106 (EFLV…VRRV), 114–215 (ETHA…ATDF), and 234–322 (LKTW…SKAL). 6 helical membrane passes run 16–36 (FLVK…SVVA), 83–103 (TATL…YEQV), 120–140 (FLSG…LELI), 191–211 (FSVT…AYDL), 240–260 (LLCG…FEVC), and 294–314 (FFVG…TSFF).

This sequence belongs to the mitochondrial carrier (TC 2.A.29) family.

The protein localises to the mitochondrion inner membrane. This is an uncharacterized protein from Schizosaccharomyces pombe (strain 972 / ATCC 24843) (Fission yeast).